The chain runs to 572 residues: Proline--tRNA ligase (572 aa).

The protein belongs to the class-II aminoacyl-tRNA synthetase family. ProS type 1 subfamily. As to quaternary structure, homodimer.

Its subcellular location is the cytoplasm. It carries out the reaction tRNA(Pro) + L-proline + ATP = L-prolyl-tRNA(Pro) + AMP + diphosphate. Its function is as follows. Catalyzes the attachment of proline to tRNA(Pro) in a two-step reaction: proline is first activated by ATP to form Pro-AMP and then transferred to the acceptor end of tRNA(Pro). As ProRS can inadvertently accommodate and process non-cognate amino acids such as alanine and cysteine, to avoid such errors it has two additional distinct editing activities against alanine. One activity is designated as 'pretransfer' editing and involves the tRNA(Pro)-independent hydrolysis of activated Ala-AMP. The other activity is designated 'posttransfer' editing and involves deacylation of mischarged Ala-tRNA(Pro). The misacylated Cys-tRNA(Pro) is not edited by ProRS. The sequence is that of Proline--tRNA ligase from Pectobacterium carotovorum subsp. carotovorum (strain PC1).